We begin with the raw amino-acid sequence, 236 residues long: Leucyl/phenylalanyl-tRNA--protein transferase (236 aa).

Belongs to the L/F-transferase family.

It is found in the cytoplasm. It carries out the reaction N-terminal L-lysyl-[protein] + L-leucyl-tRNA(Leu) = N-terminal L-leucyl-L-lysyl-[protein] + tRNA(Leu) + H(+). The enzyme catalyses N-terminal L-arginyl-[protein] + L-leucyl-tRNA(Leu) = N-terminal L-leucyl-L-arginyl-[protein] + tRNA(Leu) + H(+). It catalyses the reaction L-phenylalanyl-tRNA(Phe) + an N-terminal L-alpha-aminoacyl-[protein] = an N-terminal L-phenylalanyl-L-alpha-aminoacyl-[protein] + tRNA(Phe). In terms of biological role, functions in the N-end rule pathway of protein degradation where it conjugates Leu, Phe and, less efficiently, Met from aminoacyl-tRNAs to the N-termini of proteins containing an N-terminal arginine or lysine. The chain is Leucyl/phenylalanyl-tRNA--protein transferase from Shewanella sp. (strain ANA-3).